The chain runs to 335 residues: Dihydroorotate dehydrogenase (quinone) (335 aa).

FMN contacts are provided by residues 59–63 and Thr-83; that span reads AGLDK. Lys-63 is a substrate binding site. Residue 108-112 participates in substrate binding; the sequence is NRMGF. FMN is bound by residues Asn-136 and Asn-169. Residue Asn-169 participates in substrate binding. Residue Ser-172 is the Nucleophile of the active site. Substrate is bound at residue Asn-174. 2 residues coordinate FMN: Lys-214 and Thr-242. 243–244 serves as a coordination point for substrate; that stretch reads NT. Residues Gly-265, Gly-294, and 315-316 each bind FMN; that span reads YS.

This sequence belongs to the dihydroorotate dehydrogenase family. Type 2 subfamily. In terms of assembly, monomer. The cofactor is FMN.

It localises to the cell membrane. The enzyme catalyses (S)-dihydroorotate + a quinone = orotate + a quinol. Its pathway is pyrimidine metabolism; UMP biosynthesis via de novo pathway; orotate from (S)-dihydroorotate (quinone route): step 1/1. Functionally, catalyzes the conversion of dihydroorotate to orotate with quinone as electron acceptor. This is Dihydroorotate dehydrogenase (quinone) from Neisseria meningitidis serogroup C / serotype 2a (strain ATCC 700532 / DSM 15464 / FAM18).